The sequence spans 443 residues: Phenylalanine--tRNA ligase alpha subunit (443 aa).

L-phenylalanine-binding positions include Thr-332, 375–377 (QVE), and Tyr-415. Glu-417 is a binding site for Mg(2+). Phe-441 is a binding site for L-phenylalanine.

This sequence belongs to the class-II aminoacyl-tRNA synthetase family. Phe-tRNA synthetase alpha subunit type 2 subfamily. In terms of assembly, heterotetramer; dimer of two heterodimers formed by FARSA and FARSB. Requires Mg(2+) as cofactor.

The protein resides in the cytoplasm. It catalyses the reaction tRNA(Phe) + L-phenylalanine + ATP = L-phenylalanyl-tRNA(Phe) + AMP + diphosphate + H(+). The protein is Phenylalanine--tRNA ligase alpha subunit (FARSA) of Gallus gallus (Chicken).